The sequence spans 198 residues: FMN-dependent NADH:quinone oxidoreductase (198 aa).

96–99 is a binding site for FMN; it reads MYNF.

It belongs to the azoreductase type 1 family. Homodimer. The cofactor is FMN.

It catalyses the reaction 2 a quinone + NADH + H(+) = 2 a 1,4-benzosemiquinone + NAD(+). It carries out the reaction N,N-dimethyl-1,4-phenylenediamine + anthranilate + 2 NAD(+) = 2-(4-dimethylaminophenyl)diazenylbenzoate + 2 NADH + 2 H(+). Quinone reductase that provides resistance to thiol-specific stress caused by electrophilic quinones. Functionally, also exhibits azoreductase activity. Catalyzes the reductive cleavage of the azo bond in aromatic azo compounds to the corresponding amines. In Burkholderia mallei (strain ATCC 23344), this protein is FMN-dependent NADH:quinone oxidoreductase.